We begin with the raw amino-acid sequence, 105 residues long: Large ribosomal subunit protein uL24 (105 aa).

It belongs to the universal ribosomal protein uL24 family. In terms of assembly, part of the 50S ribosomal subunit.

Functionally, one of two assembly initiator proteins, it binds directly to the 5'-end of the 23S rRNA, where it nucleates assembly of the 50S subunit. One of the proteins that surrounds the polypeptide exit tunnel on the outside of the subunit. This chain is Large ribosomal subunit protein uL24, found in Buchnera aphidicola subsp. Cinara cedri (strain Cc).